The chain runs to 306 residues: Homeobox protein HMX3 (306 aa).

The tract at residues 95-181 (HTPRTEVPDK…DKKPCRKKKT (87 aa)) is disordered. Composition is skewed to basic and acidic residues over residues 117–143 (GERDSPDPIHPLKTELGAKESESKSPE) and 153–174 (EEGKKDDSGEDWKKREDSPDKK). A DNA-binding region (homeobox) is located at residues 178-237 (KKKTRTVFSRSQVFQLESTFDMKRYLSSSERAGLAASLHLTETQVKIWFQNRRNKWKRQL).

This sequence belongs to the HMX homeobox family.

The protein resides in the nucleus. Its function is as follows. Transcription factor involved in specification of neuronal cell types and which is required for inner ear and hypothalamus development. Binds to the 5'-CAAGTG-3' core sequence. May act as a stage-specific inhibitor of anf1 in the anterior neural plate during the development. The sequence is that of Homeobox protein HMX3 (hmx3) from Xenopus laevis (African clawed frog).